The primary structure comprises 1393 residues: DNA-directed RNA polymerase subunit beta' (1393 aa).

Zn(2+) is bound by residues Cys70, Cys72, Cys85, and Cys88. Mg(2+) contacts are provided by Asp461, Asp463, and Asp465. Zn(2+) contacts are provided by Cys804, Cys877, Cys884, and Cys887.

The protein belongs to the RNA polymerase beta' chain family. In terms of assembly, the RNAP catalytic core consists of 2 alpha, 1 beta, 1 beta' and 1 omega subunit. When a sigma factor is associated with the core the holoenzyme is formed, which can initiate transcription. Requires Mg(2+) as cofactor. Zn(2+) is required as a cofactor.

It carries out the reaction RNA(n) + a ribonucleoside 5'-triphosphate = RNA(n+1) + diphosphate. In terms of biological role, DNA-dependent RNA polymerase catalyzes the transcription of DNA into RNA using the four ribonucleoside triphosphates as substrates. The polypeptide is DNA-directed RNA polymerase subunit beta' (Rhodospirillum rubrum (strain ATCC 11170 / ATH 1.1.1 / DSM 467 / LMG 4362 / NCIMB 8255 / S1)).